Consider the following 185-residue polypeptide: Ribosome-recycling factor (185 aa).

The protein belongs to the RRF family.

The protein resides in the cytoplasm. Responsible for the release of ribosomes from messenger RNA at the termination of protein biosynthesis. May increase the efficiency of translation by recycling ribosomes from one round of translation to another. This Histophilus somni (strain 2336) (Haemophilus somnus) protein is Ribosome-recycling factor.